The sequence spans 360 residues: Peptide chain release factor 1 (360 aa).

At Gln235 the chain carries N5-methylglutamine. Positions 285-313 (KRQQAEASTRRNLLGSGDRSDRNRTYNFP) are disordered.

It belongs to the prokaryotic/mitochondrial release factor family. Methylated by PrmC. Methylation increases the termination efficiency of RF1.

It is found in the cytoplasm. Peptide chain release factor 1 directs the termination of translation in response to the peptide chain termination codons UAG and UAA. This is Peptide chain release factor 1 from Salmonella paratyphi A (strain ATCC 9150 / SARB42).